The following is a 287-amino-acid chain: Ribosomal RNA small subunit methyltransferase I (287 aa).

It belongs to the methyltransferase superfamily. RsmI family.

The protein resides in the cytoplasm. The enzyme catalyses cytidine(1402) in 16S rRNA + S-adenosyl-L-methionine = 2'-O-methylcytidine(1402) in 16S rRNA + S-adenosyl-L-homocysteine + H(+). Catalyzes the 2'-O-methylation of the ribose of cytidine 1402 (C1402) in 16S rRNA. The polypeptide is Ribosomal RNA small subunit methyltransferase I (Streptococcus pyogenes serotype M6 (strain ATCC BAA-946 / MGAS10394)).